Consider the following 302-residue polypeptide: Vomeronasal type-1 receptor 48 (302 aa).

The Extracellular portion of the chain corresponds to M1–T16. Residues F17–I37 traverse the membrane as a helical segment. The Cytoplasmic segment spans residues K38–D49. A helical transmembrane segment spans residues L50–A70. At T71–L91 the chain is on the extracellular side. C85 and C172 are oxidised to a cystine. A helical transmembrane segment spans residues Y92–L114. The Cytoplasmic portion of the chain corresponds to S115–N131. Residues I132–I152 traverse the membrane as a helical segment. At S153–E193 the chain is on the extracellular side. An N-linked (GlcNAc...) asparagine glycan is attached at N159. A helical transmembrane segment spans residues V194 to H214. Topologically, residues R215–Q238 are cytoplasmic. The helical transmembrane segment at T239–C259 threads the bilayer. Residues S260–T269 lie on the Extracellular side of the membrane. A helical transmembrane segment spans residues S270 to I290. Residues S291–G302 lie on the Cytoplasmic side of the membrane.

It belongs to the G-protein coupled receptor 1 family.

It is found in the cell membrane. Putative pheromone receptor implicated in the regulation of social and reproductive behavior. This Mus musculus (Mouse) protein is Vomeronasal type-1 receptor 48 (Vmn1r48).